The primary structure comprises 1076 residues: Nickel-cobalt-cadmium resistance protein NccA (1076 aa).

12 consecutive transmembrane segments (helical) span residues 14–34 (WLVL…LNLL), 367–387 (VAKN…ALLG), 391–411 (AAVI…IGMN), 419–439 (LMSL…IIVE), 476–496 (TVYG…FQGV), 503–523 (PMVI…LTFV), 562–582 (MPFL…FTFV), 904–924 (LAII…MAIG), 929–949 (TATV…ALVL), 960–980 (VGFI…ISAI), 1004–1024 (PVLM…IATG), and 1036–1056 (VVIG…PAVC).

This sequence belongs to the resistance-nodulation-cell division (RND) (TC 2.A.6) family.

It is found in the cell membrane. Component of the NCC cation-efflux system that confers resistance to nickel, cobalt and cadmium. May form a membrane tunnel, which allows ion transport across the membrane. In Alcaligenes xylosoxydans xylosoxydans (Achromobacter xylosoxidans), this protein is Nickel-cobalt-cadmium resistance protein NccA (nccA).